A 321-amino-acid chain; its full sequence is Glucokinase (321 aa).

Position 8-13 (8-13) interacts with ATP; that stretch reads GDVGGT.

Belongs to the bacterial glucokinase family.

The protein resides in the cytoplasm. The enzyme catalyses D-glucose + ATP = D-glucose 6-phosphate + ADP + H(+). In Klebsiella pneumoniae subsp. pneumoniae (strain ATCC 700721 / MGH 78578), this protein is Glucokinase.